A 99-amino-acid chain; its full sequence is Large ribosomal subunit protein uL23 (99 aa).

This sequence belongs to the universal ribosomal protein uL23 family. As to quaternary structure, part of the 50S ribosomal subunit. Contacts protein L29, and trigger factor when it is bound to the ribosome.

In terms of biological role, one of the early assembly proteins it binds 23S rRNA. One of the proteins that surrounds the polypeptide exit tunnel on the outside of the ribosome. Forms the main docking site for trigger factor binding to the ribosome. This Synechococcus sp. (strain JA-2-3B'a(2-13)) (Cyanobacteria bacterium Yellowstone B-Prime) protein is Large ribosomal subunit protein uL23.